A 356-amino-acid polypeptide reads, in one-letter code: Phosphate acyltransferase (356 aa).

This sequence belongs to the PlsX family. In terms of assembly, homodimer. Probably interacts with PlsY.

Its subcellular location is the cytoplasm. It carries out the reaction a fatty acyl-[ACP] + phosphate = an acyl phosphate + holo-[ACP]. It participates in lipid metabolism; phospholipid metabolism. In terms of biological role, catalyzes the reversible formation of acyl-phosphate (acyl-PO(4)) from acyl-[acyl-carrier-protein] (acyl-ACP). This enzyme utilizes acyl-ACP as fatty acyl donor, but not acyl-CoA. The sequence is that of Phosphate acyltransferase from Shigella flexneri serotype 5b (strain 8401).